A 48-amino-acid polypeptide reads, in one-letter code: Large ribosomal subunit protein bL33B (48 aa).

Belongs to the bacterial ribosomal protein bL33 family.

This Mycoplasma pneumoniae (strain ATCC 29342 / M129 / Subtype 1) (Mycoplasmoides pneumoniae) protein is Large ribosomal subunit protein bL33B (rpmG2).